The primary structure comprises 221 residues: Protein DEHYDRATION-INDUCED 19 homolog 2 (221 aa).

2 disordered regions span residues methionine 1–lysine 24 and valine 162–aspartate 193.

The protein belongs to the Di19 family. Not phosphorylated in vitro by CPK3 or CPK11. Expressed in seedlings, roots, leaves, stems, flowers and siliques.

Its subcellular location is the cytoplasm. The protein localises to the nucleus. The protein is Protein DEHYDRATION-INDUCED 19 homolog 2 (DI19-2) of Arabidopsis thaliana (Mouse-ear cress).